The primary structure comprises 337 residues: MSIISIAVDAMGGDFAPEAVVSGLDFALTNLLDDQNVSFNIYGQGSQVLPILDKYKDLKEHSVFIDTPEVVLANDKPSFALRKRRSSSMWCAIDSIKSGVTSGVVSSGNTGALMAISRFLLGTLPNIDRPAICTALPSRGEEYFVLLDLGANIESSSNALFQFAIMGSAFAKAVLNIASPKVALLNVGQEEVKGTDVIREAFLLLKQAEGRINFCGYIEPIDILGDKVDVVVTDGFCGNIVLKVAESIAYTFKSVFEKSVTSSIISKFAGLLLKSQMKKDFMRFNPKMYNGAMLLGLNGVVVKSHGNADKVAFAHAIKVTVNAVRNDINAKIIHELS.

It belongs to the PlsX family. In terms of assembly, homodimer. Probably interacts with PlsY.

The protein resides in the cytoplasm. The catalysed reaction is a fatty acyl-[ACP] + phosphate = an acyl phosphate + holo-[ACP]. The protein operates within lipid metabolism; phospholipid metabolism. Functionally, catalyzes the reversible formation of acyl-phosphate (acyl-PO(4)) from acyl-[acyl-carrier-protein] (acyl-ACP). This enzyme utilizes acyl-ACP as fatty acyl donor, but not acyl-CoA. This Ehrlichia chaffeensis (strain ATCC CRL-10679 / Arkansas) protein is Phosphate acyltransferase.